A 283-amino-acid polypeptide reads, in one-letter code: Bifunctional protein FolD (283 aa).

Residues 166–168 (GAS), S191, and I232 contribute to the NADP(+) site.

This sequence belongs to the tetrahydrofolate dehydrogenase/cyclohydrolase family. Homodimer.

The enzyme catalyses (6R)-5,10-methylene-5,6,7,8-tetrahydrofolate + NADP(+) = (6R)-5,10-methenyltetrahydrofolate + NADPH. The catalysed reaction is (6R)-5,10-methenyltetrahydrofolate + H2O = (6R)-10-formyltetrahydrofolate + H(+). The protein operates within one-carbon metabolism; tetrahydrofolate interconversion. In terms of biological role, catalyzes the oxidation of 5,10-methylenetetrahydrofolate to 5,10-methenyltetrahydrofolate and then the hydrolysis of 5,10-methenyltetrahydrofolate to 10-formyltetrahydrofolate. In Chromobacterium violaceum (strain ATCC 12472 / DSM 30191 / JCM 1249 / CCUG 213 / NBRC 12614 / NCIMB 9131 / NCTC 9757 / MK), this protein is Bifunctional protein FolD.